The following is a 150-amino-acid chain: uncharacterized protein (150 aa).

The signal sequence occupies residues M1–G21.

This is an uncharacterized protein from Mycobacterium tuberculosis (strain CDC 1551 / Oshkosh).